A 396-amino-acid chain; its full sequence is Aspartic protease 1 (396 aa).

An N-terminal signal peptide occupies residues 1–15 (MQTFVLLALVAACSA). The 322-residue stretch at 68 to 389 (YLGNITLGTP…DIGNGQIGFA (322 aa)) folds into the Peptidase A1 domain. Asparagine 71 carries an N-linked (GlcNAc...) asparagine glycan. Residue aspartate 86 is part of the active site. Cysteine 99 and cysteine 104 are oxidised to a cystine. Residue aspartate 278 is part of the active site. Cysteine 313 and cysteine 349 are joined by a disulfide.

This sequence belongs to the peptidase A1 family. As to quaternary structure, interacts with B.thuringiensis endotoxin Cry6Aa; the interaction prevents Cry6Aa proteolysis by host gut proteases.

It localises to the cytoplasm. Its subcellular location is the lysosome. The protein resides in the secreted. In terms of biological role, aspartic protease, which is part of the necrosis cell death pathway. Promotes B.thuringiensis Cry6Aa stability by preventing its proteolysis by host gut proteases. Required for Cry6Aa-induced necrotic death of intestinal cells. Cry6Aa uptake into the host intestinal cells triggers an increase in intracellular Ca(2+) levels leading to lysosome rupture and to the subsequent release of asp-1 which leads to necrosis. This is Aspartic protease 1 from Caenorhabditis elegans.